The primary structure comprises 411 residues: Glutamate dehydrogenase 2 (411 aa).

K102 is an active-site residue.

It belongs to the Glu/Leu/Phe/Val dehydrogenases family.

It is found in the mitochondrion. It carries out the reaction L-glutamate + NAD(+) + H2O = 2-oxoglutarate + NH4(+) + NADH + H(+). It catalyses the reaction L-glutamate + NADP(+) + H2O = 2-oxoglutarate + NH4(+) + NADPH + H(+). The sequence is that of Glutamate dehydrogenase 2 (GDH2) from Arabidopsis thaliana (Mouse-ear cress).